The primary structure comprises 212 residues: Peptide methionine sulfoxide reductase MsrA (212 aa).

Residues 1-14 show a composition bias toward polar residues; that stretch reads MSSIDKTQRITQSD. The tract at residues 1–21 is disordered; sequence MSSIDKTQRITQSDALPGRST. The active site involves Cys-52.

This sequence belongs to the MsrA Met sulfoxide reductase family.

The catalysed reaction is L-methionyl-[protein] + [thioredoxin]-disulfide + H2O = L-methionyl-(S)-S-oxide-[protein] + [thioredoxin]-dithiol. The enzyme catalyses [thioredoxin]-disulfide + L-methionine + H2O = L-methionine (S)-S-oxide + [thioredoxin]-dithiol. In terms of biological role, has an important function as a repair enzyme for proteins that have been inactivated by oxidation. Catalyzes the reversible oxidation-reduction of methionine sulfoxide in proteins to methionine. The protein is Peptide methionine sulfoxide reductase MsrA of Pectobacterium carotovorum subsp. carotovorum (strain PC1).